A 410-amino-acid polypeptide reads, in one-letter code: Arginine deiminase (410 aa).

Catalysis depends on cysteine 400, which acts as the Amidino-cysteine intermediate.

This sequence belongs to the arginine deiminase family.

The protein localises to the cytoplasm. The enzyme catalyses L-arginine + H2O = L-citrulline + NH4(+). Its pathway is amino-acid degradation; L-arginine degradation via ADI pathway; carbamoyl phosphate from L-arginine: step 1/2. In Bacillus cereus (strain ATCC 10987 / NRS 248), this protein is Arginine deiminase.